The chain runs to 269 residues: Aminodeoxychorismate lyase (269 aa).

Position 140 is an N6-(pyridoxal phosphate)lysine (Lys140).

Belongs to the class-IV pyridoxal-phosphate-dependent aminotransferase family. As to quaternary structure, homodimer. Pyridoxal 5'-phosphate is required as a cofactor.

It carries out the reaction 4-amino-4-deoxychorismate = 4-aminobenzoate + pyruvate + H(+). It participates in cofactor biosynthesis; tetrahydrofolate biosynthesis; 4-aminobenzoate from chorismate: step 2/2. Its function is as follows. Involved in the biosynthesis of p-aminobenzoate (PABA), a precursor of tetrahydrofolate. Converts 4-amino-4-deoxychorismate into 4-aminobenzoate (PABA) and pyruvate. In Escherichia coli (strain K12), this protein is Aminodeoxychorismate lyase (pabC).